The chain runs to 342 residues: Nucleoid-associated protein Shewmr7_2293 (342 aa).

Belongs to the YejK family.

The protein localises to the cytoplasm. It localises to the nucleoid. The chain is Nucleoid-associated protein Shewmr7_2293 from Shewanella sp. (strain MR-7).